The chain runs to 50 residues: Photosystem I reaction center subunit IX (50 aa).

A helical membrane pass occupies residues 7–27 (YLSTAPVLAILCCSFLAGLVI).

The protein belongs to the PsaJ family.

It is found in the plastid. The protein localises to the chloroplast thylakoid membrane. Functionally, may help in the organization of the PsaE and PsaF subunits. This chain is Photosystem I reaction center subunit IX, found in Pinus koraiensis (Korean pine).